The sequence spans 302 residues: Possible hemolysin C (302 aa).

CBS domains are found at residues Met79–Leu141 and Leu144–Glu201.

The protein belongs to the UPF0053 family. Hemolysin C subfamily.

The chain is Possible hemolysin C (tlyC) from Rickettsia bellii (strain OSU 85-389).